We begin with the raw amino-acid sequence, 212 residues long: NADH dehydrogenase [ubiquinone] iron-sulfur protein 8, mitochondrial (212 aa).

A mitochondrion-targeting transit peptide spans 1-36 (MRCLTMPMLLRALAQAQAARAGHASVRGLHSSAVAA). 2 4Fe-4S ferredoxin-type domains span residues 104 to 133 (RRYP…IEAE) and 143 to 172 (TRYD…EGPN). Residues Cys113, Cys116, Cys119, Cys123, Cys152, Cys155, Cys158, and Cys162 each coordinate [4Fe-4S] cluster.

It belongs to the complex I 23 kDa subunit family. As to quaternary structure, core subunit of respiratory chain NADH dehydrogenase (Complex I) which is composed of 45 different subunits. This is a component of the iron-sulfur (IP) fragment of the enzyme. Interacts with RAB5IF. [4Fe-4S] cluster is required as a cofactor.

Its subcellular location is the mitochondrion inner membrane. It carries out the reaction a ubiquinone + NADH + 5 H(+)(in) = a ubiquinol + NAD(+) + 4 H(+)(out). Core subunit of the mitochondrial membrane respiratory chain NADH dehydrogenase (Complex I) which catalyzes electron transfer from NADH through the respiratory chain, using ubiquinone as an electron acceptor. Essential for the catalytic activity and assembly of complex I. The polypeptide is NADH dehydrogenase [ubiquinone] iron-sulfur protein 8, mitochondrial (NDUFS8) (Bos taurus (Bovine)).